Consider the following 349-residue polypeptide: Nitrilase, bromoxynil-specific (349 aa).

The region spanning 5–274 (FKAAAVQAEP…EGIVYAEIDL (270 aa)) is the CN hydrolase domain. Residue E45 is the Proton acceptor of the active site. K127 (proton donor) is an active-site residue. C161 serves as the catalytic Nucleophile.

It belongs to the carbon-nitrogen hydrolase superfamily. Nitrilase family. As to quaternary structure, homodimer.

The enzyme catalyses a nitrile + 2 H2O = a carboxylate + NH4(+). Specific for the herbicide bromoxynil (3,5-dibromo-4-hydroxybenzonitrile); converts it to its metabolite 3,5-dibromo-4-hydroxybenzoic acid. The sequence is that of Nitrilase, bromoxynil-specific (bxn) from Klebsiella pneumoniae subsp. ozaenae.